A 368-amino-acid polypeptide reads, in one-letter code: UDP-N-acetylenolpyruvoylglucosamine reductase (368 aa).

Residues 32–199 (IGGKPRSAVR…LAIELQLLTD (168 aa)) enclose the FAD-binding PCMH-type domain. Residue Arg-177 is part of the active site. Ser-257 (proton donor) is an active-site residue. The active site involves Glu-358.

It belongs to the MurB family. Requires FAD as cofactor.

The protein resides in the cytoplasm. It carries out the reaction UDP-N-acetyl-alpha-D-muramate + NADP(+) = UDP-N-acetyl-3-O-(1-carboxyvinyl)-alpha-D-glucosamine + NADPH + H(+). It functions in the pathway cell wall biogenesis; peptidoglycan biosynthesis. In terms of biological role, cell wall formation. This is UDP-N-acetylenolpyruvoylglucosamine reductase from Corynebacterium glutamicum (strain R).